The sequence spans 611 residues: Aspartate--tRNA(Asp/Asn) ligase (611 aa).

Residue Glu-177 coordinates L-aspartate. The segment at 201–204 (QLFK) is aspartate. Arg-223 is an L-aspartate binding site. Residues 223–225 (RDE) and Gln-232 each bind ATP. His-461 provides a ligand contact to L-aspartate. Residue Glu-499 coordinates ATP. Arg-506 is a binding site for L-aspartate. Residue 551-554 (GVDR) coordinates ATP.

It belongs to the class-II aminoacyl-tRNA synthetase family. Type 1 subfamily. Homodimer.

The protein localises to the cytoplasm. It carries out the reaction tRNA(Asx) + L-aspartate + ATP = L-aspartyl-tRNA(Asx) + AMP + diphosphate. Functionally, aspartyl-tRNA synthetase with relaxed tRNA specificity since it is able to aspartylate not only its cognate tRNA(Asp) but also tRNA(Asn). Reaction proceeds in two steps: L-aspartate is first activated by ATP to form Asp-AMP and then transferred to the acceptor end of tRNA(Asp/Asn). The polypeptide is Aspartate--tRNA(Asp/Asn) ligase (Synechococcus sp. (strain WH7803)).